A 259-amino-acid polypeptide reads, in one-letter code: Sugar fermentation stimulation protein homolog (259 aa).

This sequence belongs to the SfsA family.

The sequence is that of Sugar fermentation stimulation protein homolog from Prochlorococcus marinus (strain MIT 9303).